We begin with the raw amino-acid sequence, 946 residues long: DNA ligase 4 (946 aa).

Residues Glu295, Lys297, Arg302, Glu355, Phe397, Glu457, Lys462, Lys479, and Lys481 each coordinate ATP. Catalysis depends on Lys297, which acts as the N6-AMP-lysine intermediate. Mg(2+) is bound at residue Glu355. Glu457 contacts Mg(2+). BRCT domains follow at residues 688 to 787 (HRSD…PSHC) and 845 to 945 (VPHF…NYRL).

This sequence belongs to the ATP-dependent DNA ligase family. Mg(2+) is required as a cofactor.

Its subcellular location is the nucleus. It catalyses the reaction ATP + (deoxyribonucleotide)n-3'-hydroxyl + 5'-phospho-(deoxyribonucleotide)m = (deoxyribonucleotide)n+m + AMP + diphosphate.. In terms of biological role, DNA ligase involved in DNA non-homologous end joining (NHEJ); required for double-strand break (DSB) repair. The protein is DNA ligase 4 (LIG4) of Candida glabrata (strain ATCC 2001 / BCRC 20586 / JCM 3761 / NBRC 0622 / NRRL Y-65 / CBS 138) (Yeast).